We begin with the raw amino-acid sequence, 209 residues long: Mitochondrial import inner membrane translocase subunit Tim23 (209 aa).

Helical transmembrane passes span 73-93 (FELA…FGAL), 125-145 (ALWA…GVIV), and 180-200 (GGLA…WEHI).

Belongs to the Tim17/Tim22/Tim23 family. As to quaternary structure, component of the TIM23 complex at least composed of timm23, timm17 and timm50. The complex interacts with the timm44 component of the PAM complex.

It is found in the mitochondrion inner membrane. Its function is as follows. Essential component of the TIM23 complex, a complex that mediates the translocation of transit peptide-containing proteins across the mitochondrial inner membrane. The chain is Mitochondrial import inner membrane translocase subunit Tim23 (timm23) from Xenopus laevis (African clawed frog).